The following is a 400-amino-acid chain: Renin (400 aa).

The N-terminal stretch at 1–23 (MDAWRGMPRWGLLLLLWGSCTFG) is a signal peptide. The propeptide at 24–60 (LPTETTTFKRISLKRMPSIRESLKERGVDMARLGPER) is activation peptide. Residue N65 is glycosylated (N-linked (GlcNAc...) asparagine). The 318-residue stretch at 80–397 (YYGEIGIGTP…DRGNNRIGFA (318 aa)) folds into the Peptidase A1 domain. D98 is a catalytic residue. C111 and C118 are joined by a disulfide. The N-linked (GlcNAc...) asparagine glycan is linked to N135. The cysteines at positions 277 and 281 are disulfide-linked. D286 is an active-site residue. The cysteines at positions 319 and 356 are disulfide-linked.

Belongs to the peptidase A1 family. In terms of assembly, interacts with ATP6AP2.

It is found in the secreted. The protein localises to the membrane. It carries out the reaction Cleavage of Leu-|-Xaa bond in angiotensinogen to generate angiotensin I.. With respect to regulation, interaction with ATP6AP2 results in a 5-fold increased efficiency in angiotensinogen processing. Functionally, renin is a highly specific endopeptidase, whose only known function is to generate angiotensin I from angiotensinogen in the plasma, initiating a cascade of reactions that produce an elevation of blood pressure and increased sodium retention by the kidney. This Callithrix jacchus (White-tufted-ear marmoset) protein is Renin (REN).